Consider the following 347-residue polypeptide: Terpene synthase 2 (347 aa).

The Mg(2+) site is built by Asp-103, Asn-247, Ser-251, and Glu-255. Positions Asp-103–Glu-107 match the D(D/E)XX(D/E) motif motif. Residues Asn-247–Glu-255 carry the NSE motif motif. Residues Trp-329–Tyr-336 carry the WxxxxxRY motif motif.

Belongs to the terpene synthase family. Mg(2+) is required as a cofactor.

Its function is as follows. Terpene synthase that may be involved in the production of volatile terpenoids. Does not show detectable terpene products with either farnesyl diphosphate (FPP) or geranyl diphosphate (GPP). P.polycephalum has a unique biology and these volatile terpenoids could function in internal communication of P.polycephalum, to mark the territory that have been explored, or they may be involved in chemotaxis. The sequence is that of Terpene synthase 2 from Physarum polycephalum (Slime mold).